A 39-amino-acid polypeptide reads, in one-letter code: Photosystem II reaction center protein Psb30 (39 aa).

Residues 12–32 (IFQLTFVGLIMVAGPVVIFLL) form a helical membrane-spanning segment.

It belongs to the Psb30/Ycf12 family. PSII is composed of 1 copy each of membrane proteins PsbA, PsbB, PsbC, PsbD, PsbE, PsbF, PsbH, PsbI, PsbJ, PsbK, PsbL, PsbM, PsbT, PsbX, PsbY, PsbZ, Psb30/Ycf12, peripheral proteins PsbO, CyanoQ (PsbQ), PsbU, PsbV and a large number of cofactors. It forms dimeric complexes.

Its subcellular location is the cellular thylakoid membrane. A core subunit of photosystem II (PSII), probably helps stabilize the reaction center. This is Photosystem II reaction center protein Psb30 from Rippkaea orientalis (strain PCC 8801 / RF-1) (Cyanothece sp. (strain PCC 8801)).